A 239-amino-acid polypeptide reads, in one-letter code: uncharacterized protein (239 aa).

Positions Arg193–Ser214 are disordered.

It is found in the nucleus. This is an uncharacterized protein from Schizosaccharomyces pombe (strain 972 / ATCC 24843) (Fission yeast).